The following is a 316-amino-acid chain: Methionyl-tRNA formyltransferase (316 aa).

108-111 (SLLP) contributes to the (6S)-5,6,7,8-tetrahydrofolate binding site.

It belongs to the Fmt family.

It catalyses the reaction L-methionyl-tRNA(fMet) + (6R)-10-formyltetrahydrofolate = N-formyl-L-methionyl-tRNA(fMet) + (6S)-5,6,7,8-tetrahydrofolate + H(+). Attaches a formyl group to the free amino group of methionyl-tRNA(fMet). The formyl group appears to play a dual role in the initiator identity of N-formylmethionyl-tRNA by promoting its recognition by IF2 and preventing the misappropriation of this tRNA by the elongation apparatus. The protein is Methionyl-tRNA formyltransferase of Heliobacterium modesticaldum (strain ATCC 51547 / Ice1).